A 347-amino-acid chain; its full sequence is Phenylalanine--tRNA ligase alpha subunit (347 aa).

E261 serves as a coordination point for Mg(2+).

The protein belongs to the class-II aminoacyl-tRNA synthetase family. Phe-tRNA synthetase alpha subunit type 1 subfamily. In terms of assembly, tetramer of two alpha and two beta subunits. Mg(2+) is required as a cofactor.

Its subcellular location is the cytoplasm. It carries out the reaction tRNA(Phe) + L-phenylalanine + ATP = L-phenylalanyl-tRNA(Phe) + AMP + diphosphate + H(+). The sequence is that of Phenylalanine--tRNA ligase alpha subunit from Streptococcus mutans serotype c (strain ATCC 700610 / UA159).